Consider the following 264-residue polypeptide: Thymidylate synthase (264 aa).

Arginine 21 provides a ligand contact to dUMP. Histidine 51 lines the (6R)-5,10-methylene-5,6,7,8-tetrahydrofolate pocket. 126-127 is a dUMP binding site; it reads RR. The active-site Nucleophile is the cysteine 146. DUMP contacts are provided by residues 166-169, asparagine 177, and 207-209; these read RSCD and HLY. (6R)-5,10-methylene-5,6,7,8-tetrahydrofolate is bound at residue aspartate 169. Residue alanine 263 coordinates (6R)-5,10-methylene-5,6,7,8-tetrahydrofolate.

Belongs to the thymidylate synthase family. Bacterial-type ThyA subfamily. Homodimer.

It localises to the cytoplasm. The enzyme catalyses dUMP + (6R)-5,10-methylene-5,6,7,8-tetrahydrofolate = 7,8-dihydrofolate + dTMP. It participates in pyrimidine metabolism; dTTP biosynthesis. Catalyzes the reductive methylation of 2'-deoxyuridine-5'-monophosphate (dUMP) to 2'-deoxythymidine-5'-monophosphate (dTMP) while utilizing 5,10-methylenetetrahydrofolate (mTHF) as the methyl donor and reductant in the reaction, yielding dihydrofolate (DHF) as a by-product. This enzymatic reaction provides an intracellular de novo source of dTMP, an essential precursor for DNA biosynthesis. The sequence is that of Thymidylate synthase from Aeromonas hydrophila subsp. hydrophila (strain ATCC 7966 / DSM 30187 / BCRC 13018 / CCUG 14551 / JCM 1027 / KCTC 2358 / NCIMB 9240 / NCTC 8049).